A 318-amino-acid chain; its full sequence is Malate dehydrogenase (318 aa).

Residues G10–G15 and D34 each bind NAD(+). 2 residues coordinate substrate: R83 and R89. NAD(+) is bound by residues N96 and I119–N121. Substrate contacts are provided by N121 and R152. H176 serves as the catalytic Proton acceptor.

This sequence belongs to the LDH/MDH superfamily. MDH type 3 family.

It catalyses the reaction (S)-malate + NAD(+) = oxaloacetate + NADH + H(+). In terms of biological role, catalyzes the reversible oxidation of malate to oxaloacetate. In Rhodospirillum rubrum (strain ATCC 11170 / ATH 1.1.1 / DSM 467 / LMG 4362 / NCIMB 8255 / S1), this protein is Malate dehydrogenase.